A 441-amino-acid chain; its full sequence is Transcriptional regulatory protein ZraR (441 aa).

A Response regulatory domain is found at 7 to 121 (DILVVDDDIS…NLQATLEKAL (115 aa)). At Asp56 the chain carries 4-aspartylphosphate. Residues 141 to 370 (MVGKSPAMQH…LENAVERAVV (230 aa)) enclose the Sigma-54 factor interaction domain. Gly172, Thr173, Arg329, and Arg359 together coordinate ATP. Residues 421–440 (KTEAARQLGITRKTLLAKLS) constitute a DNA-binding region (H-T-H motif).

As to quaternary structure, monomer. In terms of processing, phosphorylated by ZraS.

It is found in the cytoplasm. Its activity is regulated as follows. Activity of the ZraS/ZraR two-component system is repressed by the zinc-bound form of ZraP, which probably interacts with the periplasmic region of ZraS. Its function is as follows. Part of the Zra signaling pathway, an envelope stress response (ESR) system composed of the periplasmic accessory protein ZraP, the histidine kinase ZraS and the transcriptional regulator ZraR. The ZraPSR system contributes to antibiotic resistance and is important for membrane integrity in the presence of membrane-targeting biocides. ZraR is a member of the two-component regulatory system ZraS/ZraR. When activated by ZraS, acts in conjunction with sigma-54 to regulate the expression of zraP in the presence of high Zn(2+) or Pb(2+) concentrations. Also positively autoregulates the expression of the zraSR operon. Binds to a region within the zraP-zraSR intergenic region that is characterized by two inverted repeats separated by a 14 bp spacer. In addition, controls a regulon of genes of diverse functions that may be critical to maintain envelope integrity and cell survival under stressful conditions. The system has no direct role in zinc or copper resistance. This chain is Transcriptional regulatory protein ZraR, found in Escherichia coli (strain K12).